The primary structure comprises 157 residues: Transcriptional repressor NrdR (157 aa).

The interval 1–24 is disordered; the sequence is MRCPKCGGNKSSVVDSRQAEDGNT. The segment at 3–34 is a zinc-finger region; the sequence is CPKCGGNKSSVVDSRQAEDGNTIRRRRECEEC. One can recognise an ATP-cone domain in the interval 49–139; it reads LVVVKKDGTR…VYRSFKDVGE (91 aa).

The protein belongs to the NrdR family. It depends on Zn(2+) as a cofactor.

Functionally, negatively regulates transcription of bacterial ribonucleotide reductase nrd genes and operons by binding to NrdR-boxes. In Streptococcus sanguinis (strain SK36), this protein is Transcriptional repressor NrdR.